A 153-amino-acid polypeptide reads, in one-letter code: MAREPEKTVCQNRKARHEYFILETYEAGLVLKGTEVKSLRAGKANLKDSFARIQNGELWLENMHVSPYEQGNRFNHEPKRPRKLLMHKSEIMRLWGKTREKGLALIPLRVYFKDGRAKVELALAKGKKLYDKRDDIAKREAEREIARAARGKA.

This sequence belongs to the SmpB family.

Its subcellular location is the cytoplasm. In terms of biological role, required for rescue of stalled ribosomes mediated by trans-translation. Binds to transfer-messenger RNA (tmRNA), required for stable association of tmRNA with ribosomes. tmRNA and SmpB together mimic tRNA shape, replacing the anticodon stem-loop with SmpB. tmRNA is encoded by the ssrA gene; the 2 termini fold to resemble tRNA(Ala) and it encodes a 'tag peptide', a short internal open reading frame. During trans-translation Ala-aminoacylated tmRNA acts like a tRNA, entering the A-site of stalled ribosomes, displacing the stalled mRNA. The ribosome then switches to translate the ORF on the tmRNA; the nascent peptide is terminated with the 'tag peptide' encoded by the tmRNA and targeted for degradation. The ribosome is freed to recommence translation, which seems to be the essential function of trans-translation. The protein is SsrA-binding protein of Desulforudis audaxviator (strain MP104C).